Consider the following 392-residue polypeptide: Caveolae-associated protein 1 (392 aa).

An N-acetylmethionine modification is found at Met-1. Residues 1-10 (MEDVTLHIVE) show a composition bias toward basic and acidic residues. Residues 1-45 (MEDVTLHIVERPYSGYPDASSEGPEPTPGEARATEEPSGTGSDEL) form a disordered region. The interval 1–100 (MEDVTLHIVE…IQGELSKLGK (100 aa)) is required for homotrimerization and for interaction with CAVIN2 and CAVIN3. A phosphoserine mark is found at Ser-21 and Ser-38. Thr-40 carries the post-translational modification Phosphothreonine. Phosphoserine occurs at positions 42 and 48. Residues 54–64 (VLVLSLLDKII) are nuclear export signal. Residues 55–77 (LVLSLLDKIIGAVDQIQLTQAQL) are leucine-zipper 1. Lys-118 is covalently cross-linked (Glycyl lysine isopeptide (Lys-Gly) (interchain with G-Cter in SUMO2)). Phosphoserine is present on Ser-120. Residue Lys-124 forms a Glycyl lysine isopeptide (Lys-Gly) (interchain with G-Cter in SUMO2) linkage. The nuclear localization signal stretch occupies residues 138-154 (KKLEVNEAELLRRRNFK). Phosphotyrosine is present on Tyr-158. A Glycyl lysine isopeptide (Lys-Gly) (interchain with G-Cter in SUMO1); alternate cross-link involves residue Lys-163. Lys-163 participates in a covalent cross-link: Glycyl lysine isopeptide (Lys-Gly) (interchain with G-Cter in SUMO2); alternate. Residue Lys-167 forms a Glycyl lysine isopeptide (Lys-Gly) (interchain with G-Cter in SUMO2) linkage. The tract at residues 168-188 (LSVSKSLKESEALPEKEGDEL) is leucine-zipper 2. Phosphoserine is present on residues Ser-169 and Ser-171. Residue Lys-172 forms a Glycyl lysine isopeptide (Lys-Gly) (interchain with G-Cter in SUMO2) linkage. Phosphoserine occurs at positions 173 and 177. Residues 173–183 (SLKESEALPEK) show a composition bias toward basic and acidic residues. Residues 173–198 (SLKESEALPEKEGDELGEGERPEEDA) are disordered. Over residues 184–198 (EGDELGEGERPEEDA) the composition is skewed to acidic residues. A coiled-coil region spans residues 201 to 284 (IELSSDEAVE…RMNKLGTRLV (84 aa)). 2 positions are modified to phosphoserine: Ser-204 and Ser-205. A nuclear localization signal region spans residues 235 to 251 (KKAFSKEKMEKTKVRTR). The leucine-zipper 3 stretch occupies residues 259-299 (LKTKENLEKTRHTLEKRMNKLGTRLVPVERREKLKTSRDKL). A Phosphoserine modification is found at Ser-302. Residue Thr-304 is modified to Phosphothreonine. Tyr-310 carries the post-translational modification Phosphotyrosine. Lys-328 is covalently cross-linked (Glycyl lysine isopeptide (Lys-Gly) (interchain with G-Cter in SUMO2)). The disordered stretch occupies residues 347-367 (GPDDDEVGAERGAETDLLRGS). Positions 354-363 (GAERGAETDL) are enriched in basic and acidic residues. Phosphoserine occurs at positions 367, 368, 381, 389, and 391.

The protein belongs to the CAVIN family. Component of the CAVIN complex composed of CAVIN1, CAVIN2, CAVIN3 and CAVIN4. Interacts with RNA polymerase I subunit POLR1A/RPA1 and TTF1. Binds the 3' end of pre-rRNA. Interacts with transcription factor ZNF148. Interacts with LIPE in the adipocyte cytoplasm. Interacts with CAV1, CAV3, CAVIN2, CAVIN3 and CAVIN4. In terms of processing, phosphorylated. Present in active and inactive forms. Changes in phosphorylation pattern may alter activity. Phosphorylation at Tyr-158 is essential for its function in the regulation of ribosomal transcriptional activity. Post-translationally, monoubiquitinated. In terms of tissue distribution, expressed in the adipocyte (at protein level). Expressed in all striated and smooth muscles tested including diaphragm, esophageal striated muscle, fibroblast, endocardial endothelium, epicardial mesothelium, intestinal smooth muscle, masseter, soleus muscle, vascular smooth muscle and white gastrocnemius muscle (at protein level). Expressed in the endothelium and perineural sheath (at protein level). Not expressed in hepatocytes.

The protein resides in the membrane. It localises to the caveola. The protein localises to the cell membrane. It is found in the microsome. Its subcellular location is the endoplasmic reticulum. The protein resides in the cytoplasm. It localises to the cytosol. The protein localises to the mitochondrion. It is found in the nucleus. Plays an important role in caveolae formation and organization. Essential for the formation of caveolae in all tissues. Core component of the CAVIN complex which is essential for recruitment of the complex to the caveolae in presence of calveolin-1 (CAV1). Essential for normal oligomerization of CAV1. Promotes ribosomal transcriptional activity in response to metabolic challenges in the adipocytes and plays an important role in the formation of the ribosomal transcriptional loop. Dissociates transcription complexes paused by DNA-bound TTF1, thereby releasing both RNA polymerase I and pre-RNA from the template. The caveolae biogenesis pathway is required for the secretion of proteins such as GASK1A. The sequence is that of Caveolae-associated protein 1 from Rattus norvegicus (Rat).